Consider the following 575-residue polypeptide: MPVVRLSQAFVPTLKEAPADAQVASHKLLVRAGFIRQLGAGIYDYLPLAKRTLAKIEAIVREEMDAIGGQEFYLPALHPAEIWKESGRWEVMGDNMFRLKDRKNGDYCLGMTHEEIFTAIARDELRSYRQLPQVWYQIQTKFRDEPRPKSGLLRVRQFTMKDAYSFDVDRAGLDKSYEDQRRAYERIFTRCGLDFVAVQAHSGAMGGSESSEFMVRTDAGEDLVAACPRCRYAANTETATSRLASEQDGAGLPKPEKFATPGVVTIEALEQPPYGVAARRQLKTLVYVADEKLVVAVVRGDQELNEAKLQTATGAQVIRPAHPEEIPSLMGARAGSLGAVGFSRAKVFVDPSLADRKDMVTGANEDGFHLRGVEVRRDVLTGPHATVAELRTVRAGEGCPRCDGTLDVFKALEVGHIFKLGTKYSESMKATVLDADGKAVPIVMGSYGIGVERIMAAAIELHHDELGIRWPPAIAPFQATVLTLGPEPELKKAADELVKALSDAGLEVLHDDREERAGVKFKDADLVGIPLRISVGKKGLAEGKVEWKLRGDKAVELVPLAEVARRAAEHVRAGR.

The protein belongs to the class-II aminoacyl-tRNA synthetase family. ProS type 1 subfamily. In terms of assembly, homodimer.

It localises to the cytoplasm. The enzyme catalyses tRNA(Pro) + L-proline + ATP = L-prolyl-tRNA(Pro) + AMP + diphosphate. Its function is as follows. Catalyzes the attachment of proline to tRNA(Pro) in a two-step reaction: proline is first activated by ATP to form Pro-AMP and then transferred to the acceptor end of tRNA(Pro). As ProRS can inadvertently accommodate and process non-cognate amino acids such as alanine and cysteine, to avoid such errors it has two additional distinct editing activities against alanine. One activity is designated as 'pretransfer' editing and involves the tRNA(Pro)-independent hydrolysis of activated Ala-AMP. The other activity is designated 'posttransfer' editing and involves deacylation of mischarged Ala-tRNA(Pro). The misacylated Cys-tRNA(Pro) is not edited by ProRS. This is Proline--tRNA ligase from Anaeromyxobacter sp. (strain Fw109-5).